The chain runs to 810 residues: Phenylalanine--tRNA ligase beta subunit (810 aa).

The tRNA-binding domain occupies 39 to 151; sequence RTWAAGVVVG…AGLQAGQPVG (113 aa). The 87-residue stretch at 408 to 494 folds into the B5 domain; it reads EPEHSITLRL…RLYGYDNFGE (87 aa). Mg(2+)-binding residues include Asp472, Asp478, Glu481, and Glu482. One can recognise an FDX-ACB domain in the interval 716 to 809; sequence SSFPASDRDL…LVERFRVTLR (94 aa).

This sequence belongs to the phenylalanyl-tRNA synthetase beta subunit family. Type 1 subfamily. Tetramer of two alpha and two beta subunits. It depends on Mg(2+) as a cofactor.

The protein localises to the cytoplasm. The enzyme catalyses tRNA(Phe) + L-phenylalanine + ATP = L-phenylalanyl-tRNA(Phe) + AMP + diphosphate + H(+). In Synechococcus elongatus (strain ATCC 33912 / PCC 7942 / FACHB-805) (Anacystis nidulans R2), this protein is Phenylalanine--tRNA ligase beta subunit (pheT).